Reading from the N-terminus, the 509-residue chain is uncharacterized protein (509 aa).

Transmembrane regions (helical) follow at residues 14 to 34 (SAFT…WVIP), 117 to 137 (TIEA…IGVI), 158 to 178 (EFFI…TCGI), 188 to 208 (ILVP…GAIF), 209 to 229 (LAAS…VIAS), 240 to 260 (IGFR…YLYW), 303 to 323 (LILT…MVGG), 324 to 344 (WWFP…MFIS), 359 to 379 (ASEL…NLVL), 399 to 419 (MPGS…GLIV), 423 to 443 (SGLA…VGIP), 458 to 478 (MLFL…QIPF), and 484 to 504 (FVMP…VVQV).

It to E.coli YfcC. To B.subtilis YcgA.

It localises to the cell membrane. This is an uncharacterized protein from Haemophilus influenzae (strain ATCC 51907 / DSM 11121 / KW20 / Rd).